A 289-amino-acid polypeptide reads, in one-letter code: Protein SET (289 aa).

A disordered region spans residues 1–45 (MAPKRQSAILPQPKKPRPAAAPKLEDKSASPGLPKGEKEQQEAIE). The residue at position 2 (alanine 2) is a N,N,N-trimethylalanine; by NTM1. At serine 7 the chain carries Phosphoserine. Position 11 is an N6-acetyllysine (proline 11). A Phosphoserine modification is found at lysine 15. At lysine 23 the chain carries N6-acetyllysine. A Phosphothreonine modification is found at lysine 23. Serine 28 bears the Phosphoserine mark. A dimerization region spans residues 31-77 (PGLPKGEKEQQEAIEHIDEVQNEIDRLNEQASEEILKVEQKYNKLRQ). Residues 35–45 (KGEKEQQEAIE) show a composition bias toward basic and acidic residues. Position 62 is a phosphoserine (serine 62). Lysine 67 carries the N6-acetyllysine modification. Residues 78–224 (PFFQKRSELI…ELGEVIKDDI (147 aa)) form an earmuff domain region. A Phosphotyrosine modification is found at tyrosine 145. Lysine 149 is modified (N6-acetyllysine). Lysine 153 participates in a covalent cross-link: Glycyl lysine isopeptide (Lys-Gly) (interchain with G-Cter in ubiquitin). Disordered regions lie at residues 157-206 (LNES…TWFT) and 235-289 (PDMD…GEDD). Over residues 168 to 180 (TEIKWKSGKDLTK) the composition is skewed to basic and acidic residues. Lysine 171 carries the N6-acetyllysine modification. The segment covering 236–289 (DMDDEEGEAEDDDDDDEEEEGLEDIDEEGDEDEGEEDDDEDEGEEGEEDEGEDD) has biased composition (acidic residues).

The protein belongs to the nucleosome assembly protein (NAP) family. Headphone-shaped homodimer. Isoform 1 and isoform 2 interact directly with each other and with ANP32A within the tripartite INHAT (inhibitor of acetyltransferases) complex. Isoform 1 and isoform 2 interact also with histones. Isoform 2 is a omponent of the SET complex, composed of at least ANP32A, APEX1, HMGB2, NME1, SET and TREX1, but not NME2 or TREX2. Within this complex, directly interacts with ANP32A, NME1, HMGB2 and TREX1; the interaction with ANP32A is enhanced after cleavage. Interacts with APBB1, CHTOP, SETBP1, SGO1. Post-translationally, some glutamate residues are glycylated by TTLL8. This modification occurs exclusively on glutamate residues and results in a glycine chain on the gamma-carboxyl group. In terms of processing, N-terminus of isoform 1 is methylated by METTL11A/NTM1. Mainly trimethylated. Cleaved after Lys-176 by GZMA. The cleavage inhibits its nucleosome assembly activity and disrupts the inhibition on NME1.

The protein localises to the cytoplasm. The protein resides in the cytosol. Its subcellular location is the endoplasmic reticulum. It localises to the nucleus. It is found in the nucleoplasm. Multitasking protein, involved in apoptosis, transcription, nucleosome assembly and histone chaperoning. Isoform 2 anti-apoptotic activity is mediated by inhibition of the GZMA-activated DNase, NME1. In the course of cytotoxic T-lymphocyte (CTL)-induced apoptosis, GZMA cleaves SET, disrupting its binding to NME1 and releasing NME1 inhibition. Isoform 1 and isoform 2 are potent inhibitors of protein phosphatase 2A. Isoform 1 and isoform 2 inhibit EP300/CREBBP and PCAF-mediated acetylation of histones (HAT) and nucleosomes, most probably by masking the accessibility of lysines of histones to the acetylases. The predominant target for inhibition is histone H4. HAT inhibition leads to silencing of HAT-dependent transcription and prevents active demethylation of DNA. Both isoforms stimulate DNA replication of the adenovirus genome complexed with viral core proteins; however, isoform 2 specific activity is higher. The sequence is that of Protein SET (Set) from Mus musculus (Mouse).